The following is a 621-amino-acid chain: Interferon-induced GTP-binding protein Mx1 (621 aa).

The 274-residue stretch at 31 to 304 (DLALPAIAVI…LVHHIEKSLP (274 aa)) folds into the Dynamin-type G domain. The interval 41–48 (GDQSSGKS) is G1 motif. 41–48 (GDQSSGKS) is a GTP binding site. The tract at residues 66–68 (VTR) is G2 motif. Residues 142–145 (DLPG) are G3 motif. Residues 142-146 (DLPGI) and 211-214 (TKPD) each bind GTP. The interval 211–214 (TKPD) is G4 motif. Residues 243 to 246 (KCRG) form a G5 motif region. Residues 535–621 (LQEMMLHLKS…MKARSYLVEF (87 aa)) enclose the GED domain.

It belongs to the TRAFAC class dynamin-like GTPase superfamily. Dynamin/Fzo/YdjA family.

The protein localises to the cytoplasm. Does not inhibit strain RB-1 of the fish pathogen, infectious hematopoietic necrosis virus (IHNV). The polypeptide is Interferon-induced GTP-binding protein Mx1 (mx1) (Oncorhynchus mykiss (Rainbow trout)).